Here is a 512-residue protein sequence, read N- to C-terminus: ATP synthase subunit alpha (512 aa).

An ATP-binding site is contributed by 169 to 176 (GDRQTGKT).

The protein belongs to the ATPase alpha/beta chains family. In terms of assembly, F-type ATPases have 2 components, CF(1) - the catalytic core - and CF(0) - the membrane proton channel. CF(1) has five subunits: alpha(3), beta(3), gamma(1), delta(1), epsilon(1). CF(0) has three main subunits: a(1), b(2) and c(9-12). The alpha and beta chains form an alternating ring which encloses part of the gamma chain. CF(1) is attached to CF(0) by a central stalk formed by the gamma and epsilon chains, while a peripheral stalk is formed by the delta and b chains.

It localises to the cell inner membrane. The catalysed reaction is ATP + H2O + 4 H(+)(in) = ADP + phosphate + 5 H(+)(out). Produces ATP from ADP in the presence of a proton gradient across the membrane. The alpha chain is a regulatory subunit. The protein is ATP synthase subunit alpha of Dechloromonas aromatica (strain RCB).